The chain runs to 141 residues: Small ribosomal subunit protein bS18c (141 aa).

2 disordered regions span residues 14–55 (EFIA…IKPG) and 120–141 (IKRR…RPKK). A compositionally biased stretch (pro residues) spans 24-34 (PKAPLQPPLPP). Positions 35–51 (SKRKGKPPKSPRRRSSR) are enriched in basic residues.

This sequence belongs to the bacterial ribosomal protein bS18 family. Part of the 30S ribosomal subunit.

It localises to the plastid. The protein resides in the chloroplast. The polypeptide is Small ribosomal subunit protein bS18c (Pelargonium hortorum (Common geranium)).